A 279-amino-acid polypeptide reads, in one-letter code: 3-methyl-2-oxobutanoate hydroxymethyltransferase (279 aa).

2 residues coordinate Mg(2+): D44 and D83. Residues D44–S45, D83, and K113 contribute to the 3-methyl-2-oxobutanoate site. Residue E115 participates in Mg(2+) binding. E182 serves as the catalytic Proton acceptor.

This sequence belongs to the PanB family. In terms of assembly, homodecamer; pentamer of dimers. It depends on Mg(2+) as a cofactor.

The protein localises to the cytoplasm. It catalyses the reaction 3-methyl-2-oxobutanoate + (6R)-5,10-methylene-5,6,7,8-tetrahydrofolate + H2O = 2-dehydropantoate + (6S)-5,6,7,8-tetrahydrofolate. The protein operates within cofactor biosynthesis; (R)-pantothenate biosynthesis; (R)-pantoate from 3-methyl-2-oxobutanoate: step 1/2. Functionally, catalyzes the reversible reaction in which hydroxymethyl group from 5,10-methylenetetrahydrofolate is transferred onto alpha-ketoisovalerate to form ketopantoate. The chain is 3-methyl-2-oxobutanoate hydroxymethyltransferase from Dehalococcoides mccartyi (strain ATCC BAA-2100 / JCM 16839 / KCTC 5957 / BAV1).